A 123-amino-acid polypeptide reads, in one-letter code: Large ribosomal subunit protein bL12 (123 aa).

This sequence belongs to the bacterial ribosomal protein bL12 family. As to quaternary structure, homodimer. Part of the ribosomal stalk of the 50S ribosomal subunit. Forms a multimeric L10(L12)X complex, where L10 forms an elongated spine to which 2 to 4 L12 dimers bind in a sequential fashion. Binds GTP-bound translation factors.

Its function is as follows. Forms part of the ribosomal stalk which helps the ribosome interact with GTP-bound translation factors. Is thus essential for accurate translation. This is Large ribosomal subunit protein bL12 from Metamycoplasma arthritidis (strain 158L3-1) (Mycoplasma arthritidis).